The primary structure comprises 49 residues: Large ribosomal subunit protein eL40 (49 aa).

This sequence belongs to the eukaryotic ribosomal protein eL40 family.

This chain is Large ribosomal subunit protein eL40, found in Haloquadratum walsbyi (strain DSM 16790 / HBSQ001).